We begin with the raw amino-acid sequence, 736 residues long: Subtilisin-like protease SBT4.6 (736 aa).

The first 24 residues, 1-24 (MATAVSYCLLSCIFALLVVSFASA), serve as a signal peptide directing secretion. Residues 25–111 (GKDDQDKQVY…VFPSKNLNLQ (87 aa)) constitute a propeptide, activation peptide. The Inhibitor I9 domain maps to 33-110 (VYIVYMGALP…SVFPSKNLNL (78 aa)). Residues 115-589 (SWNFMGLKEG…AGHVDPIAAI (475 aa)) enclose the Peptidase S8 domain. Asp143 functions as the Charge relay system in the catalytic mechanism. An N-linked (GlcNAc...) asparagine glycan is attached at Asn174. Catalysis depends on His204, which acts as the Charge relay system. An N-linked (GlcNAc...) asparagine glycan is attached at Asn227. Residues 362-442 (KYPLVYGKSA…PVSVLSEDDY (81 aa)) enclose the PA domain. Asn450 is a glycosylation site (N-linked (GlcNAc...) asparagine). Ser527 acts as the Charge relay system in catalysis. Asn564, Asn598, Asn610, and Asn668 each carry an N-linked (GlcNAc...) asparagine glycan.

It belongs to the peptidase S8 family. Post-translationally, the C-terminal propeptide is autocleaved.

It is found in the secreted. This is Subtilisin-like protease SBT4.6 from Arabidopsis thaliana (Mouse-ear cress).